Here is a 226-residue protein sequence, read N- to C-terminus: MVDKTSVAAEIAEPERRKVFRKVFRQLGAATVITMFGKAVLDSRPARAASVLRPPGALPEPEFNAACIRCGLCVEACPLDILHLASWSDPAPTGTPYFVGRTDPCRMCPDIPCARACPTGALSPLLTDIKKADMGVAVLVGHETCLNYKGLTCSICVRVCPIIGEAISLKQIKNERGVLQIPTVDSSKCTGCGTCEKHCVLSEAAIRLLPRELGLGVEGAQSVGRW.

4Fe-4S ferredoxin-type domains are found at residues 59 to 87, 95 to 127, 136 to 172, and 180 to 211; these read PEPE…LASW, TPYF…PLLT, VAVL…LKQI, and QIPT…LLPR. Positions 67, 70, 73, 77, 105, 108, 113, 117, 145, 153, 156, 160, 189, 192, 195, and 199 each coordinate [4Fe-4S] cluster.

The protein operates within one-carbon metabolism; methylamine degradation. Its function is as follows. Involved in electron transfer. This is Methylamine utilization ferredoxin-type protein MauM (mauM) from Methylophilus methylotrophus (Bacterium W3A1).